A 392-amino-acid polypeptide reads, in one-letter code: Bone morphogenetic protein 15 (392 aa).

Positions 1–25 (MALLTILRILLWGVVLFMEQRVQMA) are cleaved as a signal peptide. Residues 26-267 (KPGWPSTALL…ESSFLMRSVR (242 aa)) constitute a propeptide that is removed on maturation. N85, N213, N236, N349, and N373 each carry an N-linked (GlcNAc...) asparagine glycan. 3 disulfide bridges follow: C291–C357, C320–C389, and C324–C391.

The protein belongs to the TGF-beta family. Homodimer. But, in contrast to other members of this family, cannot be disulfide-linked. In terms of tissue distribution, ovary specific.

The protein localises to the secreted. In terms of biological role, may be involved in follicular development. Oocyte-specific growth/differentiation factor that stimulates folliculogenesis and granulosa cell (GC) growth. This is Bone morphogenetic protein 15 (Bmp15) from Mus musculus (Mouse).